The primary structure comprises 707 residues: Metal transporter CNNM3 (707 aa).

The chain crosses the membrane as a helical span at residues leucine 11 to alanine 27. Asparagine 73 carries an N-linked (GlcNAc...) asparagine glycan. The CNNM transmembrane domain occupies glutamate 130–valine 308. The next 3 helical transmembrane spans lie at cysteine 193–leucine 213, alanine 221–alanine 241, and leucine 261–alanine 281. CBS domains lie at leucine 318 to leucine 379 and tyrosine 386 to glutamate 452. A Phosphoserine modification is found at serine 661. Over residues leucine 678–serine 691 the composition is skewed to polar residues. Residues leucine 678–valine 707 are disordered. Serine 700 bears the Phosphoserine mark.

This sequence belongs to the ACDP family. Widely expressed. Expressed at higher level in heart and spleen.

It localises to the cell membrane. Its function is as follows. Probable metal transporter. The sequence is that of Metal transporter CNNM3 (CNNM3) from Homo sapiens (Human).